The chain runs to 114 residues: Replication initiation control protein YabA (114 aa).

Zn(2+)-binding residues include His-84, Cys-86, Cys-102, and Cys-105.

It belongs to the YabA family. As to quaternary structure, homotetramer. Interacts with both DnaA and DnaN, acting as a bridge between these two proteins. The cofactor is Zn(2+).

The protein localises to the cytoplasm. It is found in the nucleoid. Functionally, involved in control of chromosome replication initiation. Inhibits the cooperative binding of DnaA to the oriC region, thus negatively regulating initiation of chromosome replication. Inhibits the ability of DnaA-ATP to form a helix on DNA; does not disassemble preformed DnaA-DNA helices. Decreases the residence time of DnaA on the chromosome at its binding sites (oriC, replication forks and promoter-binding sites). Tethers DnaA to the replication machinery via the DNA polymerase beta sliding clamp subunit (dnaN). Associates with oriC and other DnaA targets on the chromosome in a DnaA-dependent manner. This is Replication initiation control protein YabA from Ligilactobacillus salivarius (strain UCC118) (Lactobacillus salivarius).